Consider the following 529-residue polypeptide: UDP-glucuronosyltransferase 2B11 (529 aa).

Positions M1–G21 are cleaved as a signal peptide. An N6-succinyllysine modification is found at K135. N315 is a glycosylation site (N-linked (GlcNAc...) asparagine). A helical transmembrane segment spans residues V493–L513.

It belongs to the UDP-glycosyltransferase family. In terms of tissue distribution, widely expressed.

The protein resides in the microsome membrane. The protein localises to the endoplasmic reticulum membrane. It catalyses the reaction glucuronate acceptor + UDP-alpha-D-glucuronate = acceptor beta-D-glucuronoside + UDP + H(+). In terms of biological role, UDPGT is of major importance in the conjugation and subsequent elimination of potentially toxic xenobiotics and endogenous compounds. The protein is UDP-glucuronosyltransferase 2B11 (UGT2B11) of Homo sapiens (Human).